We begin with the raw amino-acid sequence, 855 residues long: Dynein axonemal assembly factor 5 (855 aa).

N-acetylalanine is present on alanine 2. HEAT repeat units follow at residues 71-109 (GPWA…RAAR), 202-240 (HMQS…FGNG), 241-278 (KSVD…CLRD), 280-318 (YSFF…QWQK), 354-376 (FRNL…VGTR), 377-414 (VKSA…DEEA), 599-638 (GEAL…RATD), 696-734 (RDVQ…TSGG), 738-776 (PEKL…CVKG), and 784-822 (QSSV…LFPD).

Belongs to the DNAAF5 family. Interacts with DNAI2; probably involved in outer arm dynein assembly. In terms of tissue distribution, expressed in nasal epithelium and lung epithelium by ciliated cells (at protein level).

The protein localises to the cytoplasm. It is found in the dynein axonemal particle. Cytoplasmic protein involved in the delivery of the dynein machinery to the motile cilium. It is required for the assembly of the axonemal dynein inner and outer arms, two structures attached to the peripheral outer doublet A microtubule of the axoneme, that play a crucial role in cilium motility. In Homo sapiens (Human), this protein is Dynein axonemal assembly factor 5.